We begin with the raw amino-acid sequence, 1024 residues long: Protein translocase subunit SecA (1024 aa).

ATP contacts are provided by residues Gln-143, Gly-161 to Thr-165, and Asp-661. Residues His-970–Pro-1024 are disordered. Residues Cys-1008, Cys-1010, Cys-1019, and His-1020 each contribute to the Zn(2+) site.

The protein belongs to the SecA family. In terms of assembly, monomer and homodimer. Part of the essential Sec protein translocation apparatus which comprises SecA, SecYEG and auxiliary proteins SecDF. Other proteins may also be involved. Requires Zn(2+) as cofactor.

It localises to the cell inner membrane. The protein localises to the cytoplasm. The catalysed reaction is ATP + H2O + cellular proteinSide 1 = ADP + phosphate + cellular proteinSide 2.. Part of the Sec protein translocase complex. Interacts with the SecYEG preprotein conducting channel. Has a central role in coupling the hydrolysis of ATP to the transfer of proteins into and across the cell membrane, serving as an ATP-driven molecular motor driving the stepwise translocation of polypeptide chains across the membrane. This Pelodictyon phaeoclathratiforme (strain DSM 5477 / BU-1) protein is Protein translocase subunit SecA.